Reading from the N-terminus, the 339-residue chain is MTPHTHVRGPGDILQLTMAFYGSRALISAVELDLFTLLAGKPLPLGELCERAGIHPRGARDFLDALVALGLLEREGEDTYRNSPAADRHLDRRKPGYVGGYARLADTKLFPVWARLTEALRTGEKQVPSQGGFFGGYADPEAARGFLGAMDAVNGGVGHSLAGALDWTEYSSFVDLGGARGNLAAHLHRAHPHLRATCFDLPEMEPFFQEHMKSLETTDQVRFAGGDFFTDPLPRADVFIVGHILHYFGLRQREALIARIHQALTPGGAVLVYDRMIDDDRRSAALSLLGSLNMLLTSDEGREYTPAECVRWLSDAGFTDVRTTAVSGPDTLAIGRKPR.

Residues aspartate 200 and 226 to 228 each bind S-adenosyl-L-methionine; that span reads GDF. Residue histidine 246 is the Proton acceptor of the active site.

This sequence belongs to the class I-like SAM-binding methyltransferase superfamily. Cation-independent O-methyltransferase family.

Its pathway is antibiotic biosynthesis; tetracenomycin C biosynthesis. The protein is Tetracenomycin polyketide synthesis 8-O-methyl transferase TcmO (tcmO) of Streptomyces glaucescens.